Reading from the N-terminus, the 578-residue chain is Poly(A) RNA polymerase cid13 (578 aa).

Aspartate 110 and aspartate 112 together coordinate Mg(2+). The 56-residue stretch at 275–330 folds into the PAP-associated domain; it reads SLGILFVEFFRFFGYLFDYEHFVLSIRHGTFLSKRAKGWQFQLNNFLCVEEPFHTS. A disordered region spans residues 495–565; that stretch reads SHHFDERHGG…SEVVSPVSLH (71 aa). Basic and acidic residues predominate over residues 496–510; the sequence is HHFDERHGGDRHEKN. Residues 516–527 are compositionally biased toward basic residues; sequence RYSRNKFHKKKQ. Over residues 547–565 the composition is skewed to low complexity; sequence NSPPSNSSSSEVVSPVSLH.

The protein belongs to the DNA polymerase type-B-like family. In terms of assembly, interacts with pab1. Mg(2+) is required as a cofactor. Mn(2+) serves as cofactor.

The protein localises to the cytoplasm. It is found in the nucleus. It carries out the reaction RNA(n) + ATP = RNA(n)-3'-adenine ribonucleotide + diphosphate. Polymerase that creates the 3' poly(A) tail of suc22 mRNA. The chain is Poly(A) RNA polymerase cid13 (cid13) from Schizosaccharomyces pombe (strain 972 / ATCC 24843) (Fission yeast).